A 92-amino-acid polypeptide reads, in one-letter code: MYGLINIGFGNVIAGDRVIAIVNPESSPLKRMKDEAKIEGKLIDATYGRKTRSIIITDSNHIILSAIQPETIAQRFMENFYEIEKTLREGKK.

It belongs to the RemA family.

The sequence is that of Putative regulatory protein CTN_0877 from Thermotoga neapolitana (strain ATCC 49049 / DSM 4359 / NBRC 107923 / NS-E).